We begin with the raw amino-acid sequence, 321 residues long: Glycerol-3-phosphate dehydrogenase [NAD(P)+] (321 aa).

Residues Ser10, Trp11, Arg31, Arg32, Tyr47, and Lys98 each contribute to the NADPH site. 3 residues coordinate sn-glycerol 3-phosphate: Lys98, Gly125, and Ser127. Ala129 contributes to the NADPH binding site. Sn-glycerol 3-phosphate-binding residues include Lys177, Asp230, Ser240, Arg241, and Asn242. Catalysis depends on Lys177, which acts as the Proton acceptor. Arg241 provides a ligand contact to NADPH. NADPH-binding residues include Val265 and Glu267.

The protein belongs to the NAD-dependent glycerol-3-phosphate dehydrogenase family.

It is found in the cytoplasm. The enzyme catalyses sn-glycerol 3-phosphate + NAD(+) = dihydroxyacetone phosphate + NADH + H(+). The catalysed reaction is sn-glycerol 3-phosphate + NADP(+) = dihydroxyacetone phosphate + NADPH + H(+). It participates in membrane lipid metabolism; glycerophospholipid metabolism. Catalyzes the reduction of the glycolytic intermediate dihydroxyacetone phosphate (DHAP) to sn-glycerol 3-phosphate (G3P), the key precursor for phospholipid synthesis. In Thermotoga sp. (strain RQ2), this protein is Glycerol-3-phosphate dehydrogenase [NAD(P)+].